The sequence spans 296 residues: Glycine--tRNA ligase alpha subunit (296 aa).

Belongs to the class-II aminoacyl-tRNA synthetase family. Tetramer of two alpha and two beta subunits.

Its subcellular location is the cytoplasm. The enzyme catalyses tRNA(Gly) + glycine + ATP = glycyl-tRNA(Gly) + AMP + diphosphate. The sequence is that of Glycine--tRNA ligase alpha subunit from Parasynechococcus marenigrum (strain WH8102).